The following is an 829-amino-acid chain: RNA-directed RNA polymerase (829 aa).

The segment at 1–39 is disordered; sequence MKEPVDCRLSTPAGFSGTVPPPGRTKAARPGTIPVRRSR.

Forms a ribonucleoprotein complex with the 20S RNA, where a single polymerase molecule binds to a single viral RNA genome. Since the viral RNA is not encapsidated, ribonucleoprotein complex formation appears to be the strategy to survive in the host as persistent virus.

It localises to the host cytoplasm. The enzyme catalyses RNA(n) + a ribonucleoside 5'-triphosphate = RNA(n+1) + diphosphate. RNA-directed RNA polymerase that replicates the viral (+) and (-) genome. The sequence is that of RNA-directed RNA polymerase from Saccharomyces cerevisiae (Baker's yeast).